A 169-amino-acid polypeptide reads, in one-letter code: Inorganic pyrophosphatase (169 aa).

Methionine 1 is subject to N-formylmethionine. Residues lysine 28, arginine 42, and tyrosine 54 each coordinate substrate. Mg(2+) contacts are provided by aspartate 64, aspartate 69, and aspartate 101. Position 138 (tyrosine 138) interacts with substrate.

The protein belongs to the PPase family. Homohexamer. The cofactor is Mg(2+).

The protein resides in the cytoplasm. It carries out the reaction diphosphate + H2O = 2 phosphate + H(+). Functionally, catalyzes the hydrolysis of inorganic pyrophosphate (PPi) forming two phosphate ions. The chain is Inorganic pyrophosphatase from Nostoc sp. (strain PCC 7120 / SAG 25.82 / UTEX 2576).